We begin with the raw amino-acid sequence, 298 residues long: Bifunctional protein FolD (298 aa).

NADP(+) contacts are provided by residues 166–168 (GRS), Ser191, and Ile232.

This sequence belongs to the tetrahydrofolate dehydrogenase/cyclohydrolase family. Homodimer.

It catalyses the reaction (6R)-5,10-methylene-5,6,7,8-tetrahydrofolate + NADP(+) = (6R)-5,10-methenyltetrahydrofolate + NADPH. It carries out the reaction (6R)-5,10-methenyltetrahydrofolate + H2O = (6R)-10-formyltetrahydrofolate + H(+). It functions in the pathway one-carbon metabolism; tetrahydrofolate interconversion. Its function is as follows. Catalyzes the oxidation of 5,10-methylenetetrahydrofolate to 5,10-methenyltetrahydrofolate and then the hydrolysis of 5,10-methenyltetrahydrofolate to 10-formyltetrahydrofolate. The polypeptide is Bifunctional protein FolD (Parvibaculum lavamentivorans (strain DS-1 / DSM 13023 / NCIMB 13966)).